The chain runs to 265 residues: Phosphate import ATP-binding protein PstB (265 aa).

Residues 18–260 form the ABC transporter domain; sequence MECRDCHVYY…PEDPRTESYI (243 aa). An ATP-binding site is contributed by 50-57; sequence GPSGCGKS.

The protein belongs to the ABC transporter superfamily. Phosphate importer (TC 3.A.1.7) family. The complex is composed of two ATP-binding proteins (PstB), two transmembrane proteins (PstC and PstA) and a solute-binding protein (PstS).

The protein localises to the cell inner membrane. The enzyme catalyses phosphate(out) + ATP + H2O = ADP + 2 phosphate(in) + H(+). Part of the ABC transporter complex PstSACB involved in phosphate import. Responsible for energy coupling to the transport system. The sequence is that of Phosphate import ATP-binding protein PstB from Ruegeria pomeroyi (strain ATCC 700808 / DSM 15171 / DSS-3) (Silicibacter pomeroyi).